Here is a 210-residue protein sequence, read N- to C-terminus: ATP-dependent Clp protease proteolytic subunit (210 aa).

Residue serine 107 is the Nucleophile of the active site. The active site involves histidine 132.

Belongs to the peptidase S14 family. As to quaternary structure, fourteen ClpP subunits assemble into 2 heptameric rings which stack back to back to give a disk-like structure with a central cavity, resembling the structure of eukaryotic proteasomes.

The protein localises to the cytoplasm. It carries out the reaction Hydrolysis of proteins to small peptides in the presence of ATP and magnesium. alpha-casein is the usual test substrate. In the absence of ATP, only oligopeptides shorter than five residues are hydrolyzed (such as succinyl-Leu-Tyr-|-NHMec, and Leu-Tyr-Leu-|-Tyr-Trp, in which cleavage of the -Tyr-|-Leu- and -Tyr-|-Trp bonds also occurs).. Its function is as follows. Cleaves peptides in various proteins in a process that requires ATP hydrolysis. Has a chymotrypsin-like activity. Plays a major role in the degradation of misfolded proteins. The polypeptide is ATP-dependent Clp protease proteolytic subunit (Chromobacterium violaceum (strain ATCC 12472 / DSM 30191 / JCM 1249 / CCUG 213 / NBRC 12614 / NCIMB 9131 / NCTC 9757 / MK)).